The chain runs to 734 residues: Photosystem I P700 chlorophyll a apoprotein A2 (734 aa).

8 consecutive transmembrane segments (helical) span residues 46 to 69, 135 to 158, 175 to 199, 273 to 291, 330 to 353, 369 to 395, 417 to 439, and 517 to 535; these read IFAS…FHVA, LYTG…LHLQ, LNHH…HVAI, IAHH…GHMY, LHFQ…QHMY, AALY…IFFI, AIIS…LYVH, and FLVH…LILV. Residues C559 and C568 each coordinate [4Fe-4S] cluster. The next 2 membrane-spanning stretches (helical) occupy residues 575-596 and 643-665; these read AFYL…YWHW and LSVW…MFLI. Positions 654, 662, and 670 each coordinate chlorophyll a. A phylloquinone-binding site is contributed by W671. A helical membrane pass occupies residues 707–727; the sequence is LVGLVHFSVGYIFTYAAFLIA.

Belongs to the PsaA/PsaB family. As to quaternary structure, the PsaA/B heterodimer binds the P700 chlorophyll special pair and subsequent electron acceptors. PSI consists of a core antenna complex that captures photons, and an electron transfer chain that converts photonic excitation into a charge separation. The eukaryotic PSI reaction center is composed of at least 11 subunits. P700 is a chlorophyll a/chlorophyll a' dimer, A0 is one or more chlorophyll a, A1 is one or both phylloquinones and FX is a shared 4Fe-4S iron-sulfur center. is required as a cofactor.

The protein localises to the plastid. It is found in the chloroplast thylakoid membrane. It carries out the reaction reduced [plastocyanin] + hnu + oxidized [2Fe-2S]-[ferredoxin] = oxidized [plastocyanin] + reduced [2Fe-2S]-[ferredoxin]. PsaA and PsaB bind P700, the primary electron donor of photosystem I (PSI), as well as the electron acceptors A0, A1 and FX. PSI is a plastocyanin-ferredoxin oxidoreductase, converting photonic excitation into a charge separation, which transfers an electron from the donor P700 chlorophyll pair to the spectroscopically characterized acceptors A0, A1, FX, FA and FB in turn. Oxidized P700 is reduced on the lumenal side of the thylakoid membrane by plastocyanin. The sequence is that of Photosystem I P700 chlorophyll a apoprotein A2 from Nicotiana tomentosiformis (Tobacco).